A 377-amino-acid polypeptide reads, in one-letter code: Deoxyribonuclease CdiA-o11 (377 aa).

A VENN CT cleavage motif motif is present at residues 81–84 (VENN). Residues 85–233 (YLSTNQSLTF…ISFMSRNTAT (149 aa)) form an inner membrane translocation domain (IMTD), targets to YciB region. Residues 88–377 (TNQSLTFDKE…GVKVTVTQVK (290 aa)) form a CT domain, sufficient to interact with CdiI region. Positions 222 to 377 (AAISFMSRNT…GVKVTVTQVK (156 aa)) are has DNase activity in vivo, cannot be expressed in the absence of CdiI. Active-site residues include glutamate 257, aspartate 278, serine 289, and lysine 291. Glutamate 257 and aspartate 278 together coordinate Zn(2+).

Interacts with cognate immunity protein CdiI-o11-EC869, which blocks its toxic DNase activity. Zn(2+) is required as a cofactor.

The protein localises to the target cell. The protein resides in the target cell cytoplasm. Toxic component of a toxin-immunity protein module, which functions as a cellular contact-dependent growth inhibition (CDI) system. CDI modules allow bacteria to communicate with and inhibit the growth of closely related neighboring bacteria in a contact-dependent fashion. The C-terminal 289 residues (the CT fragment) has a strong DNase activity in the presence of Zn(2+), completely degrading supercoiled and linear plasmids, and inhibits growth. In the presence of Mg(2+) it nicks dsDNA. Toxic activity is neutralized by coexpression of the cognate immunity protein CdiI-o11-EC869, but not by non-cognate immunity proteins from other toxin-immunity modules or other strains of E.coli. Gains access to the cytoplasm of target cells by using integral inner membrane protein YciB. In terms of biological role, expression of this locus confers protection against other bacteria carrying the locus. The protein is Deoxyribonuclease CdiA-o11 (cdiA4) of Escherichia coli O157:H7 (strain EC869).